A 55-amino-acid chain; its full sequence is Riparin-1.4 (55 aa).

An N-terminal signal peptide occupies residues 1–15; that stretch reads MKIIVVLAVLMLVSA. A propeptide spanning residues 16–41 is cleaved from the precursor; that stretch reads QVCLVSAAEMGHSSDNELSSRDLVKR. C47 and C53 are oxidised to a cystine. Residues 54-55 constitute a propeptide that is removed on maturation; that stretch reads NH.

In terms of tissue distribution, expressed by the skin glands.

The protein resides in the secreted. This chain is Riparin-1.4, found in Crinia riparia (Streambank froglet).